A 316-amino-acid polypeptide reads, in one-letter code: Leucine-rich repeat-containing protein 73 (316 aa).

LRR repeat units follow at residues 57 to 78 (SLAQLNLNLGVVSSPSRIKQLA), 86 to 106 (SIQSLFLHGSPLTDAGLALLN), 114 to 137 (ALVALDLGDCMLGDEAINLICGLL), 145 to 166 (GLKELTLSANPGITPKGWSRLA), 174 to 187 (QVRVLNLDYNPLGD), 202 to 223 (TLEVLDLEGTGLTNQSAQTLLD), and 231 to 250 (ALRSLVLAENSISPELQQQI). The interval 257–296 (GEEEEEVAGGAGDTQEWERGREPAAHQRGSSSWMCPSDPS) is disordered. Residues 272-281 (EWERGREPAA) are compositionally biased toward basic and acidic residues. The span at 286-296 (SSSWMCPSDPS) shows a compositional bias: low complexity.

This chain is Leucine-rich repeat-containing protein 73 (LRRC73), found in Homo sapiens (Human).